A 183-amino-acid chain; its full sequence is Transmembrane protein 252 (183 aa).

2 consecutive transmembrane segments (helical) span residues 8–28 and 39–59; these read ILCALSLLTGFLMICLGGFFI and LVVAYVLLPMGFVILLSGIFW.

It is found in the membrane. The protein is Transmembrane protein 252 (Tmem252) of Mus musculus (Mouse).